The sequence spans 98 residues: Large ribosomal subunit protein uL23 (98 aa).

It belongs to the universal ribosomal protein uL23 family. As to quaternary structure, part of the 50S ribosomal subunit. Contacts protein L29, and trigger factor when it is bound to the ribosome.

Its function is as follows. One of the early assembly proteins it binds 23S rRNA. One of the proteins that surrounds the polypeptide exit tunnel on the outside of the ribosome. Forms the main docking site for trigger factor binding to the ribosome. In Methylobacterium sp. (strain 4-46), this protein is Large ribosomal subunit protein uL23.